A 247-amino-acid chain; its full sequence is Sulfate transporter CysZ (247 aa).

5 helical membrane passes run 29 to 49 (FVVL…FYLF), 66 to 86 (FLSW…LATF), 141 to 160 (LLYI…IPAL), 164 to 186 (VGPV…DYPF), and 212 to 232 (VLVS…PVAI).

Belongs to the CysZ family.

The protein resides in the cell inner membrane. Its function is as follows. High affinity, high specificity proton-dependent sulfate transporter, which mediates sulfate uptake. Provides the sulfur source for the cysteine synthesis pathway. This is Sulfate transporter CysZ from Vibrio parahaemolyticus serotype O3:K6 (strain RIMD 2210633).